The primary structure comprises 442 residues: Endothelin receptor type B (442 aa).

The N-terminal stretch at 1–26 (MQPPPSLCGRALVALVLACGLSRIWG) is a signal peptide. Residues 27 to 101 (EERGFPPDRA…GPIEIKETFK (75 aa)) lie on the Extracellular side of the membrane. N59 carries an N-linked (GlcNAc...) asparagine glycan. The segment at 69–88 (AEVPKGDRTAGSPPRTISPP) is disordered. A helical transmembrane segment spans residues 102-126 (YINTVVSCLVFVLGIIGNSTLLRII). The Cytoplasmic portion of the chain corresponds to 127 to 137 (YKNKCMRNGPN). A helical membrane pass occupies residues 138-163 (ILIASLALGDLLHIVIDIPINVYKLL). The Extracellular portion of the chain corresponds to 164-175 (AEDWPFGAEMCK). Residues C174 and C255 are joined by a disulfide bond. The helical transmembrane segment at 176–197 (LVPFIQKASVGITVLSLCALSI) threads the bilayer. At 198-218 (DRYRAVASWSRIKGIGVPKWT) the chain is on the cytoplasmic side. The helical transmembrane segment at 219–243 (AVEIVLIWVVSVVLAVPEAIGFDII) threads the bilayer. At 244-271 (TMDYKGSYLRICLLHPVQKTAFMQFYKT) the chain is on the extracellular side. A helical membrane pass occupies residues 272-296 (AKDWWLFSFYFCLPLAITAFFYTLM). The Cytoplasmic segment spans residues 297-324 (TCEMLRKKSGMQIALNDHLKQRREVAKT). S305 is subject to Phosphoserine. A helical transmembrane segment spans residues 325-350 (VFCLVLVFALCWLPLHLSRILKLTLY). Topologically, residues 351–362 (NQNDPNRCELLS) are extracellular. The helical transmembrane segment at 363–389 (FLLVLDYIGINMASLNSCINPIALYLV) threads the bilayer. Residues 390 to 442 (SKRFKNCFKSCLCCWCQSFEEKQSLEEKQSCLKFKANDHGYDNFRSSNKYSSS) lie on the Cytoplasmic side of the membrane. 3 S-palmitoyl cysteine lipidation sites follow: C402, C403, and C405. S419 is subject to Phosphoserine. Y439 is modified (phosphotyrosine). S440, S441, and S442 each carry phosphoserine.

Belongs to the G-protein coupled receptor 1 family. Endothelin receptor subfamily. EDNRB sub-subfamily. Post-translationally, palmitoylation of Cys-402 was confirmed by the palmitoylation of Cys-402 in a deletion mutant lacking both Cys-403 and Cys-405. Expressed in placental stem villi vessels, but not in cultured placental villi smooth muscle cells.

It is found in the cell membrane. In terms of biological role, non-specific receptor for endothelin 1, 2, and 3. Mediates its action by association with G proteins that activate a phosphatidylinositol-calcium second messenger system. This chain is Endothelin receptor type B, found in Homo sapiens (Human).